A 291-amino-acid polypeptide reads, in one-letter code: Phosphoribosylaminoimidazole-succinocarboxamide synthase (291 aa).

The protein belongs to the SAICAR synthetase family.

The catalysed reaction is 5-amino-1-(5-phospho-D-ribosyl)imidazole-4-carboxylate + L-aspartate + ATP = (2S)-2-[5-amino-1-(5-phospho-beta-D-ribosyl)imidazole-4-carboxamido]succinate + ADP + phosphate + 2 H(+). The protein operates within purine metabolism; IMP biosynthesis via de novo pathway; 5-amino-1-(5-phospho-D-ribosyl)imidazole-4-carboxamide from 5-amino-1-(5-phospho-D-ribosyl)imidazole-4-carboxylate: step 1/2. The sequence is that of Phosphoribosylaminoimidazole-succinocarboxamide synthase (ADE1) from Candida albicans (Yeast).